Consider the following 257-residue polypeptide: 1-(5-phosphoribosyl)-5-[(5-phosphoribosylamino)methylideneamino] imidazole-4-carboxamide isomerase (257 aa).

D8 functions as the Proton acceptor in the catalytic mechanism. D129 (proton donor) is an active-site residue.

It belongs to the HisA/HisF family.

The protein resides in the cytoplasm. The enzyme catalyses 1-(5-phospho-beta-D-ribosyl)-5-[(5-phospho-beta-D-ribosylamino)methylideneamino]imidazole-4-carboxamide = 5-[(5-phospho-1-deoxy-D-ribulos-1-ylimino)methylamino]-1-(5-phospho-beta-D-ribosyl)imidazole-4-carboxamide. The protein operates within amino-acid biosynthesis; L-histidine biosynthesis; L-histidine from 5-phospho-alpha-D-ribose 1-diphosphate: step 4/9. The sequence is that of 1-(5-phosphoribosyl)-5-[(5-phosphoribosylamino)methylideneamino] imidazole-4-carboxamide isomerase from Acaryochloris marina (strain MBIC 11017).